Reading from the N-terminus, the 265-residue chain is Hydroxyethylthiazole kinase (265 aa).

A substrate-binding site is contributed by M36. ATP is bound by residues K112 and S160. G187 lines the substrate pocket.

Belongs to the Thz kinase family. It depends on Mg(2+) as a cofactor.

The enzyme catalyses 5-(2-hydroxyethyl)-4-methylthiazole + ATP = 4-methyl-5-(2-phosphooxyethyl)-thiazole + ADP + H(+). It functions in the pathway cofactor biosynthesis; thiamine diphosphate biosynthesis; 4-methyl-5-(2-phosphoethyl)-thiazole from 5-(2-hydroxyethyl)-4-methylthiazole: step 1/1. In terms of biological role, catalyzes the phosphorylation of the hydroxyl group of 4-methyl-5-beta-hydroxyethylthiazole (THZ). This chain is Hydroxyethylthiazole kinase, found in Clostridium perfringens (strain 13 / Type A).